The sequence spans 897 residues: 4-hydroxyphenylacetate decarboxylase glycyl radical subunit (897 aa).

Positions 35–770 (ESTQKLMDIY…VTLATADGRL (736 aa)) constitute a PFL domain. The 4-hydroxyphenylacetate site is built by Ser344 and Cys503. Catalysis depends on Cys503, which acts as the Cysteine radical intermediate. The active-site Proton donor is the Glu505. The 4-hydroxyphenylacetate site is built by His536 and Glu637. In terms of domain architecture, Glycine radical spans 778 to 897 (GSVSAAAGTD…EVIYRTEYDK (120 aa)). Residue Gly873 is modified to Glycine radical.

Belongs to the glycyl radical enzyme (GRE) family. HPAD subfamily. In terms of assembly, heterooctamer consisting of 4 large (HpdB) subunits and 4 small (HpdC) subunits, arranged as a tetramer of heterodimers. Also forms a catalytically inactive homodimer. In terms of processing, requires the activating protein CsdA to generate the key active site glycyl radical that is involved in catalysis. Phosphorylated on serine. Phosphorylation may trigger the formation of the active heterooctamers and thereby regulates enzyme activity.

It carries out the reaction 4-hydroxyphenylacetate + H(+) = 4-methylphenol + CO2. The enzyme catalyses 3,4-dihydroxyphenylacetate + H(+) = 4-methylcatechol + CO2. Functionally, glycyl radical subunit of the HPA decarboxylase that decarboxylates phenylacetates with a hydroxyl group in the p-position. Active toward 4-hydroxyphenylacetate and 3,4-dihydroxyphenylacetate, forming 4-methylphenol and 4-methylcatechol, respectively. Is likely involved in the catabolism of aromatic amino acids such as tyrosine fermentation. 4-methylphenol (p-cresol) formation provides metabolic toxicity, which allows an active suppression of other microbes and may provide growth advantages for the producers in highly competitive environments. The large subunit is the catalytic subunit that binds the substrate. This is 4-hydroxyphenylacetate decarboxylase glycyl radical subunit from Clostridium scatologenes.